A 468-amino-acid polypeptide reads, in one-letter code: Adenosylhomocysteinase (468 aa).

Substrate contacts are provided by threonine 57, aspartate 132, and glutamate 194. NAD(+) is bound at residue 195 to 197 (TTT). The substrate site is built by lysine 224 and aspartate 228. Residues asparagine 229, 258–263 (GFGDVG), glutamate 281, asparagine 316, 337–339 (IGH), and asparagine 382 contribute to the NAD(+) site.

The protein belongs to the adenosylhomocysteinase family. NAD(+) is required as a cofactor.

It localises to the cytoplasm. It carries out the reaction S-adenosyl-L-homocysteine + H2O = L-homocysteine + adenosine. The protein operates within amino-acid biosynthesis; L-homocysteine biosynthesis; L-homocysteine from S-adenosyl-L-homocysteine: step 1/1. In terms of biological role, may play a key role in the regulation of the intracellular concentration of adenosylhomocysteine. The protein is Adenosylhomocysteinase of Methylobacterium nodulans (strain LMG 21967 / CNCM I-2342 / ORS 2060).